The chain runs to 464 residues: NADH-quinone oxidoreductase subunit N 1 (464 aa).

14 consecutive transmembrane segments (helical) span residues 6–26, 33–53, 65–85, 98–118, 122–142, 155–175, 192–212, 237–257, 259–279, 285–305, 312–332, 356–376, 401–421, and 436–456; these read ILPE…ELFL, FLSV…FFVN, VDAL…FVLL, YGEL…MISS, AIIF…VGLF, YLVI…LVYA, FALG…AVPF, IGMY…FPDW, YVVM…AYAQ, LLAY…TAVD, LLFY…VLAI, LASM…AAVF, ASLI…LYSG, and FTVL…HVVL.

This sequence belongs to the complex I subunit 2 family. NDH-1 is composed of 14 different subunits. Subunits NuoA, H, J, K, L, M, N constitute the membrane sector of the complex.

The protein resides in the cell inner membrane. The catalysed reaction is a quinone + NADH + 5 H(+)(in) = a quinol + NAD(+) + 4 H(+)(out). Functionally, NDH-1 shuttles electrons from NADH, via FMN and iron-sulfur (Fe-S) centers, to quinones in the respiratory chain. The immediate electron acceptor for the enzyme in this species is believed to be ubiquinone. Couples the redox reaction to proton translocation (for every two electrons transferred, four hydrogen ions are translocated across the cytoplasmic membrane), and thus conserves the redox energy in a proton gradient. This chain is NADH-quinone oxidoreductase subunit N 1, found in Aquifex aeolicus (strain VF5).